The primary structure comprises 44 residues: Photosystem I reaction center subunit IX (44 aa).

Residues 7 to 27 (YLSVAPVLATLWFGSLAGLLI) traverse the membrane as a helical segment.

Belongs to the PsaJ family.

It is found in the plastid. The protein localises to the chloroplast thylakoid membrane. Its function is as follows. May help in the organization of the PsaE and PsaF subunits. The sequence is that of Photosystem I reaction center subunit IX from Illicium oligandrum (Star anise).